The sequence spans 256 residues: Chitinase 11 (256 aa).

Positions 1–22 (MRRLLPLAGATLLIAAAGGASG) are cleaved as a signal peptide. Disulfide bonds link Cys48–Cys109 and Cys214–Cys247. Glu91 functions as the Proton donor in the catalytic mechanism.

It belongs to the glycosyl hydrolase 19 family. Chitinase class II subfamily. As to expression, expressed in leaves and at lower levels in roots, sheaths and meristems.

It catalyses the reaction Random endo-hydrolysis of N-acetyl-beta-D-glucosaminide (1-&gt;4)-beta-linkages in chitin and chitodextrins.. This chain is Chitinase 11 (Cht11), found in Oryza sativa subsp. japonica (Rice).